Consider the following 407-residue polypeptide: Melanoma-associated antigen B6 (407 aa).

Positions 1–175 (MPRGHKSKLR…YDVAAEGEDE (175 aa)) are disordered. Polar residues-rich tracts occupy residues 18–29 (TNGQPQGLTGPQ), 57–71 (DASI…SPTG), 94–113 (PSTS…SPTG), and 136–155 (PSTS…SPTG). The MAGE domain maps to 195–394 (VKKKACTLAQ…GLYPHLYEDA (200 aa)).

In terms of tissue distribution, expressed in testis. Not expressed in other normal tissues, but is expressed in tumors of different histological origins.

This is Melanoma-associated antigen B6 (MAGEB6) from Homo sapiens (Human).